We begin with the raw amino-acid sequence, 398 residues long: Succinate--CoA ligase [ADP-forming] subunit beta (398 aa).

The region spanning 9–254 (KRLLHEYGAP…LSEEDPKEIE (246 aa)) is the ATP-grasp domain. Residues lysine 46, 53-55 (GRG), glutamate 109, alanine 112, and glutamate 117 contribute to the ATP site. Positions 209 and 223 each coordinate Mg(2+). Residues asparagine 274 and 331 to 333 (GIM) contribute to the substrate site.

It belongs to the succinate/malate CoA ligase beta subunit family. In terms of assembly, heterotetramer of two alpha and two beta subunits. Requires Mg(2+) as cofactor.

The catalysed reaction is succinate + ATP + CoA = succinyl-CoA + ADP + phosphate. It carries out the reaction GTP + succinate + CoA = succinyl-CoA + GDP + phosphate. Its pathway is carbohydrate metabolism; tricarboxylic acid cycle; succinate from succinyl-CoA (ligase route): step 1/1. Succinyl-CoA synthetase functions in the citric acid cycle (TCA), coupling the hydrolysis of succinyl-CoA to the synthesis of either ATP or GTP and thus represents the only step of substrate-level phosphorylation in the TCA. The beta subunit provides nucleotide specificity of the enzyme and binds the substrate succinate, while the binding sites for coenzyme A and phosphate are found in the alpha subunit. The sequence is that of Succinate--CoA ligase [ADP-forming] subunit beta from Bartonella quintana (strain Toulouse) (Rochalimaea quintana).